The primary structure comprises 204 residues: Imidazoleglycerol-phosphate dehydratase (204 aa).

Belongs to the imidazoleglycerol-phosphate dehydratase family.

It localises to the cytoplasm. The enzyme catalyses D-erythro-1-(imidazol-4-yl)glycerol 3-phosphate = 3-(imidazol-4-yl)-2-oxopropyl phosphate + H2O. Its pathway is amino-acid biosynthesis; L-histidine biosynthesis; L-histidine from 5-phospho-alpha-D-ribose 1-diphosphate: step 6/9. The polypeptide is Imidazoleglycerol-phosphate dehydratase (Rhodococcus erythropolis (strain PR4 / NBRC 100887)).